The chain runs to 472 residues: Carboxypeptidase E (472 aa).

Positions 1 to 21 (MLHAMRPVLLVAALLAVTAHA) are cleaved as a signal peptide. In terms of domain architecture, Peptidase M14 spans 39 to 359 (HYHNQAQLEA…KSIFEYVWKS (321 aa)). His-101 and Glu-104 together coordinate Zn(2+). Asn-134 carries N-linked (GlcNAc...) asparagine glycosylation. His-232 lines the Zn(2+) pocket. The Proton donor/acceptor role is filled by Glu-329. N-linked (GlcNAc...) asparagine glycans are attached at residues Asn-385 and Asn-428.

This sequence belongs to the peptidase M14 family. It depends on Zn(2+) as a cofactor. Expression is restricted to the nervous system.

The protein localises to the cell projection. The protein resides in the axon. It localises to the perikaryon. Its subcellular location is the cytoplasmic vesicle. It is found in the secretory vesicle lumen. It carries out the reaction Release of C-terminal arginine or lysine residues from polypeptides.. Its function is as follows. During FMRFamide-like peptide (FaRPs or FLP) and neuropeptide-like protein (NLP) precursor processing, catalyzes the removal of Arg or Lys residues from the C-terminus following the initial endoprotease cleavage. By processing neuropeptides, modulates basal acetylcholine release at the ventral cord neuromuscular junctions. Involved in egg-laying, defecation and locomotion. By processing FLP neuropeptides, regulates the turning step of male mating behavior. Involved in reducing pharyngeal pumping in response to high CO(2) levels. This is Carboxypeptidase E from Caenorhabditis elegans.